Consider the following 368-residue polypeptide: MVVLGSTGSIGKNALKIAKKFGVEIEALSCGKNIALINEQIKVFKPKKVAILDPSDLNNLEPLGAEVFVGLDGIDAMIEECVSNLVLNAIVGVAGLKASFKSLQRNKKLALANKESLVSAGNLLDISQITPVDSEHFGLWALLQNKTLKPKSLIISASGGAFRDTPLELIAIQNAQNALKHPNWSMGSKITIDSASMVNKLFEILETYWLFGTSLKIDALIERSSIVHALVEFEDNSIIVHLASADMQLPISYAIDPKLASLNASIKPLDLYALNAIKFEPISMERYTLWRYKDLLLENPKLGVVLNASNEVAMEKFLNQEIAFGGLIQTISQALELYAKKSFKLSSLDEVLELDKEVRERFENVAGV.

8 residues coordinate NADPH: threonine 7, glycine 8, serine 9, isoleucine 10, glycine 31, lysine 32, asparagine 33, and asparagine 113. Lysine 114 contributes to the 1-deoxy-D-xylulose 5-phosphate binding site. Glutamate 115 provides a ligand contact to NADPH. Aspartate 133 contributes to the Mn(2+) binding site. Residues serine 134, glutamate 135, serine 158, and histidine 181 each coordinate 1-deoxy-D-xylulose 5-phosphate. Mn(2+) is bound at residue glutamate 135. Position 187 (glycine 187) interacts with NADPH. Residues serine 194, asparagine 199, lysine 200, and glutamate 203 each contribute to the 1-deoxy-D-xylulose 5-phosphate site. Residue glutamate 203 participates in Mn(2+) binding.

This sequence belongs to the DXR family. Requires Mg(2+) as cofactor. Mn(2+) serves as cofactor.

The enzyme catalyses 2-C-methyl-D-erythritol 4-phosphate + NADP(+) = 1-deoxy-D-xylulose 5-phosphate + NADPH + H(+). The protein operates within isoprenoid biosynthesis; isopentenyl diphosphate biosynthesis via DXP pathway; isopentenyl diphosphate from 1-deoxy-D-xylulose 5-phosphate: step 1/6. Its function is as follows. Catalyzes the NADPH-dependent rearrangement and reduction of 1-deoxy-D-xylulose-5-phosphate (DXP) to 2-C-methyl-D-erythritol 4-phosphate (MEP). This chain is 1-deoxy-D-xylulose 5-phosphate reductoisomerase, found in Helicobacter pylori (strain HPAG1).